The sequence spans 58 residues: Bestoxin (58 aa).

In terms of domain architecture, LCN-type CS-alpha/beta spans 3 to 58 (VPGNYPLDKDGNTYTCLELGENKDCQKVCKLHGVQYGYCYAFSCWCKEYLDDKDSV). Intrachain disulfides connect Cys-18–Cys-41, Cys-27–Cys-46, and Cys-31–Cys-48.

Expressed by the venom gland.

It localises to the secreted. Its function is as follows. Beta toxins bind voltage-independently at site-4 of sodium channels (Nav) and shift the voltage of activation toward more negative potentials thereby affecting sodium channel activation and promoting spontaneous and repetitive firing. In mice, causes intense writhing. This chain is Bestoxin, found in Parabuthus transvaalicus (Transvaal thick-tailed scorpion).